A 426-amino-acid chain; its full sequence is Glutamyl-tRNA reductase (426 aa).

Substrate-binding positions include 49–52 (TCNR), S109, 114–116 (EGQ), and Q120. C50 functions as the Nucleophile in the catalytic mechanism. 189 to 194 (GAGKMS) is an NADP(+) binding site.

It belongs to the glutamyl-tRNA reductase family. Homodimer.

The enzyme catalyses (S)-4-amino-5-oxopentanoate + tRNA(Glu) + NADP(+) = L-glutamyl-tRNA(Glu) + NADPH + H(+). Its pathway is porphyrin-containing compound metabolism; protoporphyrin-IX biosynthesis; 5-aminolevulinate from L-glutamyl-tRNA(Glu): step 1/2. It functions in the pathway porphyrin-containing compound metabolism; chlorophyll biosynthesis. In terms of biological role, catalyzes the NADPH-dependent reduction of glutamyl-tRNA(Glu) to glutamate 1-semialdehyde (GSA). This is Glutamyl-tRNA reductase from Thermosynechococcus vestitus (strain NIES-2133 / IAM M-273 / BP-1).